The chain runs to 454 residues: MKHLASSIALTLLLPAVQAQQTVWGQCGGQGWSGPTSCVAGAACSTLNPYYAQCIPGATATSTTLTTTTAATTTSQTTTKPTTTGPTTSAPTVTASGNPFSGYQLYANPYYSSEVHTLAMPSLPSSLQPKASAVAEVPSFVWLDVAAKVPTMGTYLADIQAKNKAGANPPIAGIFVVYDLPDRDCAALASNGEYSIANNGVANYKAYIDAIRAQLVKYSDVHTILVIEPDSLANLVTNLNVAKCANAQSAYLECVDYALKQLNLPNVAMYLDAGHAGWLGWPANLGPAATLFAKVYTDAGSPAAVRGLATNVANYNAWSLSTCPSYTQGDPNCDEKKYINAMAPLLKEAGFDAHFIMDTSRNGVQPTKQNAWGDWCNVIGTGFGVRPSTNTGDPLQDAFVWIKPGGESDGTSNSTSPRYDAHCGYSDALQPAPEAGTWFQAYFEQLLTNANPSF.

The first 19 residues, Met-1–Ala-19, serve as a signal peptide directing secretion. Positions Gln-20–Ile-55 constitute a CBM1 domain. Disulfide bonds link Cys-27-Cys-44 and Cys-38-Cys-54. 2 thr-rich linker regions span residues Thr-59–Thr-94 and Ala-95–Phe-454. Residues Thr-68–Ala-95 form a disordered region. Asp-184 is an active-site residue. Intrachain disulfides connect Cys-185–Cys-244 and Cys-376–Cys-423. Asp-230 acts as the Proton donor in catalysis. The active-site Nucleophile is the Asp-409. Asn-413 carries N-linked (GlcNAc...) asparagine glycosylation.

Belongs to the glycosyl hydrolase 6 (cellulase B) family.

The protein localises to the secreted. The catalysed reaction is Hydrolysis of (1-&gt;4)-beta-D-glucosidic linkages in cellulose and cellotetraose, releasing cellobiose from the non-reducing ends of the chains.. Functionally, the biological conversion of cellulose to glucose generally requires three types of hydrolytic enzymes: (1) Endoglucanases which cut internal beta-1,4-glucosidic bonds; (2) Exocellobiohydrolases that cut the disaccharide cellobiose from the non-reducing end of the cellulose polymer chain; (3) Beta-1,4-glucosidases which hydrolyze the cellobiose and other short cello-oligosaccharides to glucose. This chain is Probable 1,4-beta-D-glucan cellobiohydrolase C (cbhC), found in Aspergillus fumigatus (strain CBS 144.89 / FGSC A1163 / CEA10) (Neosartorya fumigata).